The chain runs to 272 residues: Dermonecrotic toxin SpeSicTox-betaIB2b (272 aa).

His5 is a catalytic residue. Glu25 and Asp27 together coordinate Mg(2+). The Nucleophile role is filled by His41. 2 cysteine pairs are disulfide-bonded: Cys45-Cys51 and Cys47-Cys191. A Mg(2+)-binding site is contributed by Asp85.

Belongs to the arthropod phospholipase D family. Class II subfamily. Requires Mg(2+) as cofactor. As to expression, expressed by the venom gland.

The protein localises to the secreted. It catalyses the reaction an N-(acyl)-sphingosylphosphocholine = an N-(acyl)-sphingosyl-1,3-cyclic phosphate + choline. The catalysed reaction is an N-(acyl)-sphingosylphosphoethanolamine = an N-(acyl)-sphingosyl-1,3-cyclic phosphate + ethanolamine. It carries out the reaction a 1-acyl-sn-glycero-3-phosphocholine = a 1-acyl-sn-glycero-2,3-cyclic phosphate + choline. The enzyme catalyses a 1-acyl-sn-glycero-3-phosphoethanolamine = a 1-acyl-sn-glycero-2,3-cyclic phosphate + ethanolamine. Its function is as follows. Dermonecrotic toxins cleave the phosphodiester linkage between the phosphate and headgroup of certain phospholipids (sphingolipid and lysolipid substrates), forming an alcohol (often choline) and a cyclic phosphate. This toxin acts on sphingomyelin (SM). It may also act on ceramide phosphoethanolamine (CPE), lysophosphatidylcholine (LPC) and lysophosphatidylethanolamine (LPE), but not on lysophosphatidylserine (LPS), and lysophosphatidylglycerol (LPG). It acts by transphosphatidylation, releasing exclusively cyclic phosphate products as second products. Induces dermonecrosis, hemolysis, increased vascular permeability, edema, inflammatory response, and platelet aggregation. The sequence is that of Dermonecrotic toxin SpeSicTox-betaIB2b from Sicarius peruensis (Six-eyed sand spider).